The chain runs to 186 residues: Ribosome-recycling factor (186 aa).

The protein belongs to the RRF family.

The protein resides in the cytoplasm. In terms of biological role, responsible for the release of ribosomes from messenger RNA at the termination of protein biosynthesis. May increase the efficiency of translation by recycling ribosomes from one round of translation to another. In Beijerinckia indica subsp. indica (strain ATCC 9039 / DSM 1715 / NCIMB 8712), this protein is Ribosome-recycling factor.